Reading from the N-terminus, the 150-residue chain is Cytochrome c oxidase subunit 5A, mitochondrial (150 aa).

The N-terminal 41 residues, 1-41, are a transit peptide targeting the mitochondrion; that stretch reads MLGTALRRCAVAAASRAGPRGLQHPAPVPGPTAAIQSIRCY. Positions 2–17 match the SIFI-degron motif; sequence LGTALRRCAVAAASRA. An N6-acetyllysine mark is found at Lys87 and Lys113. The residue at position 141 (Thr141) is a Phosphothreonine.

This sequence belongs to the cytochrome c oxidase subunit 5A family. Component of the cytochrome c oxidase (complex IV, CIV), a multisubunit enzyme composed of 14 subunits. The complex is composed of a catalytic core of 3 subunits MT-CO1, MT-CO2 and MT-CO3, encoded in the mitochondrial DNA, and 11 supernumerary subunits COX4I, COX5A, COX5B, COX6A, COX6B, COX6C, COX7A, COX7B, COX7C, COX8 and NDUFA4, which are encoded in the nuclear genome. The complex exists as a monomer or a dimer and forms supercomplexes (SCs) in the inner mitochondrial membrane with NADH-ubiquinone oxidoreductase (complex I, CI) and ubiquinol-cytochrome c oxidoreductase (cytochrome b-c1 complex, complex III, CIII), resulting in different assemblies (supercomplex SCI(1)III(2)IV(1) and megacomplex MCI(2)III(2)IV(2)). Interacts with AFG1L. Interacts with RAB5IF. In terms of processing, in response to mitochondrial stress, the precursor protein is ubiquitinated by the SIFI complex in the cytoplasm before mitochondrial import, leading to its degradation. Within the SIFI complex, UBR4 initiates ubiquitin chain that are further elongated or branched by KCMF1.

It localises to the mitochondrion inner membrane. It participates in energy metabolism; oxidative phosphorylation. In terms of biological role, component of the cytochrome c oxidase, the last enzyme in the mitochondrial electron transport chain which drives oxidative phosphorylation. The respiratory chain contains 3 multisubunit complexes succinate dehydrogenase (complex II, CII), ubiquinol-cytochrome c oxidoreductase (cytochrome b-c1 complex, complex III, CIII) and cytochrome c oxidase (complex IV, CIV), that cooperate to transfer electrons derived from NADH and succinate to molecular oxygen, creating an electrochemical gradient over the inner membrane that drives transmembrane transport and the ATP synthase. Cytochrome c oxidase is the component of the respiratory chain that catalyzes the reduction of oxygen to water. Electrons originating from reduced cytochrome c in the intermembrane space (IMS) are transferred via the dinuclear copper A center (CU(A)) of subunit 2 and heme A of subunit 1 to the active site in subunit 1, a binuclear center (BNC) formed by heme A3 and copper B (CU(B)). The BNC reduces molecular oxygen to 2 water molecules using 4 electrons from cytochrome c in the IMS and 4 protons from the mitochondrial matrix. The chain is Cytochrome c oxidase subunit 5A, mitochondrial (COX5A) from Nycticebus coucang (Slow loris).